The chain runs to 295 residues: Putative aquaporin-12A (295 aa).

The chain crosses the membrane as a helical span at residues 1 to 21; sequence MAGLNVSLSFFFATFALCEAA. The Extracellular portion of the chain corresponds to 22–54; that stretch reads RRASKALLPVGAYEVFAREAMRTLVELGPWAGD. A helical membrane pass occupies residues 55–75; sequence FGPDLLLTLLFLLFLAHGVTL. At 76–99 the chain is on the cytoplasmic side; it reads DGASANPTVSLQEFLMAEQSLPGT. An intramembrane region (discontinuously helical) is located at residues 77-114; the sequence is GASANPTVSLQEFLMAEQSLPGTLLKLAAQGLGMQAAC. Residues 81–83 carry the NPA 1 motif; sequence NPT. A helical membrane pass occupies residues 100–126; it reads LLKLAAQGLGMQAACTLMRLCWAWELS. The Extracellular segment spans residues 127 to 145; sequence DLHLLQSLMAQSCSSALRT. The chain crosses the membrane as a helical span at residues 146-166; that stretch reads SVPHGALVEAACAFCFHLTLL. Topologically, residues 167–178 are cytoplasmic; that stretch reads HLRHSPPAYSGP. A helical membrane pass occupies residues 179–199; the sequence is AVALLVTVTAYTAGPFTSAFF. The discontinuously helical intramembrane region spans 195 to 206; it reads TSAFFNPALAAS. Positions 200–202 match the NPA 2 motif; the sequence is NPA. The Extracellular portion of the chain corresponds to 200–215; it reads NPALAASVTFACSGHT. The chain crosses the membrane as a helical span at residues 216-236; the sequence is LLEYVQVYWLGPLTGMVLAVL. At 237–295 the chain is on the cytoplasmic side; sequence LHQGRLPHLFQRNLFYGQKNKYRAPRGKPAPASGDTQTPAKGSSVREPGRSGVEGPHSS. Positions 257–295 are disordered; it reads KYRAPRGKPAPASGDTQTPAKGSSVREPGRSGVEGPHSS.

Belongs to the MIP/aquaporin (TC 1.A.8) family. AQP11/AQP12 subfamily. In terms of assembly, homotetramer; each monomer provides an independent water pore. As to expression, restricted to the pancreas.

The protein resides in the membrane. It carries out the reaction H2O(in) = H2O(out). Putative aquaporin. Could form homotetrameric transmembrane channels, with each monomer independently mediating water transport across the plasma membrane along its osmotic gradient. This chain is Putative aquaporin-12A, found in Homo sapiens (Human).